Here is a 625-residue protein sequence, read N- to C-terminus: Probable potassium transport system protein Kup (625 aa).

Transmembrane regions (helical) follow at residues 13–33, 53–73, 103–123, 141–161, 172–192, 206–226, 250–270, 282–302, 340–360, 369–389, 400–420, and 422–442; these read TALAALGVVFGDIGTSPLYAL, ILSIIFWCLMLIISIKYVAIV, IYMIAIGFIGASLFFGDGIIT, VFDPFIMPIAIAIIVTLFLVQ, FGPITLVWFLSLGILGIHSVI, AIQFIYHHPIMTFFVMGAVVL, WFFVVLPCLVLNYAGQGALLL, LLVPQWALYPMIIMATMATVI, IYVPFLNWLLLIAIIILILIF, AYGLAVTLTMLCDTILVAVFI, VLLLIIPFFILESVLVGATSL, and ILSGGWVPLLIGAIAVTILMT.

It belongs to the HAK/KUP transporter (TC 2.A.72) family.

Its subcellular location is the cell inner membrane. It catalyses the reaction K(+)(in) + H(+)(in) = K(+)(out) + H(+)(out). In terms of biological role, transport of potassium into the cell. Likely operates as a K(+):H(+) symporter. This is Probable potassium transport system protein Kup from Acinetobacter baumannii (strain AYE).